Consider the following 492-residue polypeptide: GlcNAc-binding protein A (492 aa).

The N-terminal stretch at 1 to 23 is a signal peptide; it reads MNKSSTKTLIALSMMAVSSGVSA. One can recognise a Chitin-binding type-4 domain in the interval 24-204; sequence HGYVSETNDG…AFYNVIDVKF (181 aa). The Chitin-binding type-3 domain maps to 443–484; sequence AGTKVLAEDGNVYQCKEFPYSGYCVQWTETATNFAPGVGSDW.

This sequence belongs to the GbpA family.

Its subcellular location is the secreted. Functionally, probably interacts with GlcNAc residues. May promote attachment to both epithelial cell surfaces and chitin. This Aliivibrio fischeri (strain ATCC 700601 / ES114) (Vibrio fischeri) protein is GlcNAc-binding protein A.